Consider the following 133-residue polypeptide: Ribonuclease P protein component (133 aa).

The protein belongs to the RnpA family. As to quaternary structure, consists of a catalytic RNA component (M1 or rnpB) and a protein subunit.

The catalysed reaction is Endonucleolytic cleavage of RNA, removing 5'-extranucleotides from tRNA precursor.. RNaseP catalyzes the removal of the 5'-leader sequence from pre-tRNA to produce the mature 5'-terminus. It can also cleave other RNA substrates such as 4.5S RNA. The protein component plays an auxiliary but essential role in vivo by binding to the 5'-leader sequence and broadening the substrate specificity of the ribozyme. In Corynebacterium glutamicum (strain R), this protein is Ribonuclease P protein component.